The chain runs to 310 residues: tRNA-cytidine(32) 2-sulfurtransferase (310 aa).

The short motif at 48–53 is the PP-loop motif element; the sequence is SGGKDS. Positions 123, 126, and 214 each coordinate [4Fe-4S] cluster.

It belongs to the TtcA family. As to quaternary structure, homodimer. The cofactor is Mg(2+). It depends on [4Fe-4S] cluster as a cofactor.

It localises to the cytoplasm. The catalysed reaction is cytidine(32) in tRNA + S-sulfanyl-L-cysteinyl-[cysteine desulfurase] + AH2 + ATP = 2-thiocytidine(32) in tRNA + L-cysteinyl-[cysteine desulfurase] + A + AMP + diphosphate + H(+). Its pathway is tRNA modification. In terms of biological role, catalyzes the ATP-dependent 2-thiolation of cytidine in position 32 of tRNA, to form 2-thiocytidine (s(2)C32). The sulfur atoms are provided by the cysteine/cysteine desulfurase (IscS) system. The chain is tRNA-cytidine(32) 2-sulfurtransferase from Vibrio cholerae serotype O1 (strain ATCC 39315 / El Tor Inaba N16961).